The chain runs to 480 residues: Caspase-8 (480 aa).

A propeptide spanning residues 1-218 is cleaved from the precursor; the sequence is MDFQSCLYAI…ELCDSPREQD (218 aa). 2 DED domains span residues 3–80 and 101–177; these read FQSC…NFLD and YRVM…KIED. Serine 188 and serine 213 each carry phosphoserine. At lysine 226 the chain carries N6-acetyllysine. Histidine 319 is a catalytic residue. Residue tyrosine 336 is modified to Phosphotyrosine. Residue cysteine 362 is part of the active site. Residues 377 to 387 constitute a propeptide that is removed on maturation; it reads FEQQNHTLEVD. Serine 389 carries the phosphoserine; by CDK1 modification.

This sequence belongs to the peptidase C14A family. In terms of assembly, heterotetramer that consists of two anti-parallel arranged heterodimers, each one formed by a 18 kDa (p18) and a 10 kDa (p10) subunit. Component of the death-induced signaling complex (DISC) composed of cell surface receptor FAS/CD95 or TNFRSF1A, adapter protein FADD and the CASP8 protease; recruitment of CASP8 to the complex is required for processing of CASP8 into the p18 and p10 subunits. Component of the AIM2 PANoptosome complex, a multiprotein complex that drives inflammatory cell death (PANoptosis). Interacts with CFLAR and PEA15. Interacts with RFFL and RNF34; negatively regulate CASP8 through proteasomal degradation. Interacts with TNFAIP8L2. Interacts with CASP8AP2. Interacts with NOL3; decreases CASP8 activity in a mitochondria localization- and phosphorylation-dependent manner and this interaction is dissociated by calcium. Interacts with UBR2. Interacts with RIPK1. Interacts with stimulated TNFRSF10B; this interaction is followed by CASP8 proteolytic cleavage and activation. Generation of the subunits requires association with the death-inducing signaling complex (DISC), whereas additional processing is likely due to the autocatalytic activity of the activated protease. GZMB and CASP10 can be involved in these processing events. In terms of processing, (Microbial infection) Proteolytically cleaved by the cowpox virus CRMA death inhibitory protein. Post-translationally, phosphorylation on Ser-389 during mitosis by CDK1 inhibits activation by proteolysis and prevents apoptosis. This phosphorylation occurs in cancer cell lines, as well as in primary breast tissues and lymphocytes. Expressed in a wide variety of tissues. Highest expression in spleen, thymus, lung, liver and kidney. Lower expression in heart, brain, testis and skeletal muscle.

It is found in the cytoplasm. It localises to the nucleus. It catalyses the reaction Strict requirement for Asp at position P1 and has a preferred cleavage sequence of (Leu/Asp/Val)-Glu-Thr-Asp-|-(Gly/Ser/Ala).. With respect to regulation, CASP8 activity is restricted by RIPK1. (Microbial infection) Inhibited by baculovirus p35 protein P35. Functionally, thiol protease that plays a key role in programmed cell death by acting as a molecular switch for apoptosis, necroptosis and pyroptosis, and is required to prevent tissue damage during embryonic development and adulthood. Initiator protease that induces extrinsic apoptosis by mediating cleavage and activation of effector caspases responsible for FAS/CD95-mediated and TNFRSF1A-induced cell death. Cleaves and activates effector caspases CASP3, CASP4, CASP6, CASP7, CASP9 and CASP10. Binding to the adapter molecule FADD recruits it to either receptor FAS/CD95 or TNFRSF1A. The resulting aggregate called the death-inducing signaling complex (DISC) performs CASP8 proteolytic activation. The active dimeric enzyme is then liberated from the DISC and free to activate downstream apoptotic proteases. Proteolytic fragments of the N-terminal propeptide (termed CAP3, CAP5 and CAP6) are likely retained in the DISC. In addition to extrinsic apoptosis, also acts as a negative regulator of necroptosis: acts by cleaving RIPK1 at 'Asp-325', which is crucial to inhibit RIPK1 kinase activity, limiting TNF-induced apoptosis, necroptosis and inflammatory response. Also able to initiate pyroptosis by mediating cleavage and activation of gasdermin-C and -D (GSDMC and GSDMD, respectively): gasdermin cleavage promotes release of the N-terminal moiety that binds to membranes and forms pores, triggering pyroptosis. Initiates pyroptosis following inactivation of MAP3K7/TAK1. Also acts as a regulator of innate immunity by mediating cleavage and inactivation of N4BP1 downstream of TLR3 or TLR4, thereby promoting cytokine production. May participate in the Granzyme B (GZMB) cell death pathways. Cleaves PARP1 and PARP2. The polypeptide is Caspase-8 (Mus musculus (Mouse)).